Reading from the N-terminus, the 92-residue chain is Small ribosomal subunit protein bS20 (92 aa).

The protein belongs to the bacterial ribosomal protein bS20 family.

Its function is as follows. Binds directly to 16S ribosomal RNA. The sequence is that of Small ribosomal subunit protein bS20 from Methylacidiphilum infernorum (isolate V4) (Methylokorus infernorum (strain V4)).